Consider the following 169-residue polypeptide: Peptide methionine sulfoxide reductase MsrA (169 aa).

The active site involves cysteine 10.

The protein belongs to the MsrA Met sulfoxide reductase family.

The catalysed reaction is L-methionyl-[protein] + [thioredoxin]-disulfide + H2O = L-methionyl-(S)-S-oxide-[protein] + [thioredoxin]-dithiol. The enzyme catalyses [thioredoxin]-disulfide + L-methionine + H2O = L-methionine (S)-S-oxide + [thioredoxin]-dithiol. Has an important function as a repair enzyme for proteins that have been inactivated by oxidation. Catalyzes the reversible oxidation-reduction of methionine sulfoxide in proteins to methionine. The sequence is that of Peptide methionine sulfoxide reductase MsrA from Streptococcus pyogenes serotype M2 (strain MGAS10270).